The sequence spans 137 residues: Small ribosomal subunit protein uS9c (137 aa).

The protein belongs to the universal ribosomal protein uS9 family.

It is found in the plastid. The protein resides in the chloroplast. The chain is Small ribosomal subunit protein uS9c (rps9) from Chlorella vulgaris (Green alga).